The primary structure comprises 195 residues: Transmembrane protein 126A (195 aa).

Residues 1-33 (MENHKSNNKENITIVDISRKINQLPEAERNLLE) are Mitochondrial matrix-facing. The helical transmembrane segment at 34 to 54 (NGSVYVGLNAALCGLIANSLF) threads the bilayer. The Mitochondrial intermembrane segment spans residues 55–56 (RR). The helical transmembrane segment at 57 to 77 (ILNVTKARIAAGLPMAGIPFL) threads the bilayer. Topologically, residues 78–110 (TTDLTYRCFVSFPLNTGDLDCETCTITRSGLTG) are mitochondrial matrix. A helical membrane pass occupies residues 111–131 (LVIGGLYPVFLAIPVNGGLAA). Topologically, residues 132 to 158 (RYQSALLPHKGNILSYWIRTSKPVFRK) are mitochondrial intermembrane. A helical transmembrane segment spans residues 159–175 (MLFPILLQTMFSAYLGS). Topologically, residues 176 to 195 (EQYKLLIKALQLSEPGKEIH) are mitochondrial matrix.

Belongs to the TMEM126 family. Interacts with OXA1L; promoting cotranslational quality control in mitochondria. Strongly expressed in brain, cerebellum, skeletal muscle, testis. High expression also found in fetal brain, fetal retinal pigmentary epithelium, and fetal retina. Highly expressed in retinal ganglion cells.

Its subcellular location is the mitochondrion inner membrane. Functionally, protein required for the cotranslational protein quality control in the inner membrane of the mitochondria. Associates with newly synthesized polypeptides and may act as a chaperone that cooperates with OXA1L for the insertion of newly synthesized mitochondrial proteins into the inner membrane. Required for the assembly of the ND4 module of mitochondrial complex I. This Homo sapiens (Human) protein is Transmembrane protein 126A.